The chain runs to 199 residues: Protein-methionine-sulfoxide reductase heme-binding subunit MsrQ (199 aa).

The next 6 helical transmembrane spans lie at 8-28 (IAWL…WLFW), 54-74 (FLLA…PLLI), 82-102 (LWCF…ELGI), 116-136 (PYLT…ATST), 149-169 (LLHN…LWSV), and 171-191 (IVSP…ACRY).

It belongs to the MsrQ family. As to quaternary structure, heterodimer of a catalytic subunit (MsrP) and a heme-binding subunit (MsrQ). FMN serves as cofactor. Heme b is required as a cofactor.

It is found in the cell inner membrane. Its function is as follows. Part of the MsrPQ system that repairs oxidized periplasmic proteins containing methionine sulfoxide residues (Met-O), using respiratory chain electrons. Thus protects these proteins from oxidative-stress damage caused by reactive species of oxygen and chlorine generated by the host defense mechanisms. MsrPQ is essential for the maintenance of envelope integrity under bleach stress, rescuing a wide series of structurally unrelated periplasmic proteins from methionine oxidation. MsrQ provides electrons for reduction to the reductase catalytic subunit MsrP, using the quinone pool of the respiratory chain. The sequence is that of Protein-methionine-sulfoxide reductase heme-binding subunit MsrQ from Klebsiella pneumoniae (strain 342).